A 178-amino-acid polypeptide reads, in one-letter code: MLRDKFIHYFQQWRERQLSRGEHWLAQHLAGRSPREKGMLLAAVVFLFSVGYYVLIWQPLSERIEQQETILQQLVAMNTRLKNAAPDIIAARKSATTTPAQVSRVISDSASAHSVVIRRIADRGENIQVWIEPVVFNDLLKWLNALDEKYALRVTQIDVSAAEKPGMVNVQRLEFGRG.

The Cytoplasmic portion of the chain corresponds to methionine 1–methionine 39. A helical transmembrane segment spans residues leucine 40–leucine 60. Topologically, residues serine 61 to glycine 178 are periplasmic.

The protein belongs to the GSP M family.

The protein resides in the cell inner membrane. In terms of biological role, involved in a type II secretion system (T2SS, formerly general secretion pathway, GSP) for the export of folded proteins across the outer membrane. This Escherichia coli (strain K12) protein is Putative type II secretion system M-type protein YghD (yghD).